We begin with the raw amino-acid sequence, 477 residues long: Trigger factor (477 aa).

The 86-residue stretch at 163–248 folds into the PPIase FKBP-type domain; the sequence is ENLVIFDYKA…ITEVKKSEEV (86 aa). The span at 408–461 shows a compositional bias: basic and acidic residues; that stretch reads KAKPSKKEISKEEAEKILKEHQKQDHNHEHDHNHDHDHPEEKKASKSTKIEKKP. The tract at residues 408 to 477 is disordered; the sequence is KAKPSKKEIS…KPSTKKVSKK (70 aa).

It belongs to the FKBP-type PPIase family. Tig subfamily.

It is found in the cytoplasm. It carries out the reaction [protein]-peptidylproline (omega=180) = [protein]-peptidylproline (omega=0). Its function is as follows. Involved in protein export. Acts as a chaperone by maintaining the newly synthesized protein in an open conformation. Functions as a peptidyl-prolyl cis-trans isomerase. The sequence is that of Trigger factor from Pelagibacter ubique (strain HTCC1062).